The chain runs to 149 residues: SsrA-binding protein (149 aa).

It belongs to the SmpB family.

It is found in the cytoplasm. Functionally, required for rescue of stalled ribosomes mediated by trans-translation. Binds to transfer-messenger RNA (tmRNA), required for stable association of tmRNA with ribosomes. tmRNA and SmpB together mimic tRNA shape, replacing the anticodon stem-loop with SmpB. tmRNA is encoded by the ssrA gene; the 2 termini fold to resemble tRNA(Ala) and it encodes a 'tag peptide', a short internal open reading frame. During trans-translation Ala-aminoacylated tmRNA acts like a tRNA, entering the A-site of stalled ribosomes, displacing the stalled mRNA. The ribosome then switches to translate the ORF on the tmRNA; the nascent peptide is terminated with the 'tag peptide' encoded by the tmRNA and targeted for degradation. The ribosome is freed to recommence translation, which seems to be the essential function of trans-translation. The polypeptide is SsrA-binding protein (Thermosipho africanus (strain TCF52B)).